The primary structure comprises 349 residues: Magnesium-protoporphyrin IX monomethyl ester [oxidative] cyclase (349 aa).

Belongs to the AcsF family. Fe cation serves as cofactor.

It localises to the plastid. Its subcellular location is the chloroplast. The enzyme catalyses Mg-protoporphyrin IX 13-monomethyl ester + 3 NADPH + 3 O2 + 2 H(+) = 3,8-divinyl protochlorophyllide a + 3 NADP(+) + 5 H2O. Its pathway is porphyrin-containing compound metabolism; chlorophyll biosynthesis (light-independent). Functionally, catalyzes the formation of the isocyclic ring in chlorophyll biosynthesis. Mediates the cyclase reaction, which results in the formation of divinylprotochlorophyllide (Pchlide) characteristic of all chlorophylls from magnesium-protoporphyrin IX 13-monomethyl ester (MgPMME). In Porphyra purpurea (Red seaweed), this protein is Magnesium-protoporphyrin IX monomethyl ester [oxidative] cyclase.